A 166-amino-acid chain; its full sequence is Endoribonuclease YbeY (166 aa).

Zn(2+) contacts are provided by H111, H115, and H121. Residues 141–166 form a disordered region; sequence LGYPDPYADDESADHPHSDTPSKDHE. Residues 153 to 166 show a composition bias toward basic and acidic residues; that stretch reads ADHPHSDTPSKDHE.

The protein belongs to the endoribonuclease YbeY family. Zn(2+) serves as cofactor.

The protein resides in the cytoplasm. Single strand-specific metallo-endoribonuclease involved in late-stage 70S ribosome quality control and in maturation of the 3' terminus of the 16S rRNA. The chain is Endoribonuclease YbeY from Pseudomonas syringae pv. tomato (strain ATCC BAA-871 / DC3000).